We begin with the raw amino-acid sequence, 548 residues long: Chaperonin GroEL 2 (548 aa).

ATP contacts are provided by residues 30–33, lysine 51, 87–91, glycine 415, 479–481, and aspartate 495; these read TLGP, DGTTT, and NAA. A disordered region spans residues 524 to 548; that stretch reads APKDAPPTAPAGVPGAGAGGPGFDF. The segment covering 537 to 548 has biased composition (gly residues); it reads PGAGAGGPGFDF.

Belongs to the chaperonin (HSP60) family. As to quaternary structure, forms a cylinder of 14 subunits composed of two heptameric rings stacked back-to-back. Interacts with the co-chaperonin GroES.

Its subcellular location is the cytoplasm. It carries out the reaction ATP + H2O + a folded polypeptide = ADP + phosphate + an unfolded polypeptide.. Functionally, together with its co-chaperonin GroES, plays an essential role in assisting protein folding. The GroEL-GroES system forms a nano-cage that allows encapsulation of the non-native substrate proteins and provides a physical environment optimized to promote and accelerate protein folding. This Burkholderia pseudomallei (strain 668) protein is Chaperonin GroEL 2.